The sequence spans 414 residues: Serine/threonine-protein kinase 32B (414 aa).

The Protein kinase domain maps to 23-283 (FQILRAIGKG…LHDIQSVPYL (261 aa)). ATP is bound by residues 29 to 37 (IGKGSFGKV) and Lys52. Residue Asp146 is the Proton acceptor of the active site. A disordered region spans residues 374–396 (QGQGSQLLDTDSRGGGQAQSKLQ).

It belongs to the protein kinase superfamily. Ser/Thr protein kinase family. Requires Mg(2+) as cofactor.

It catalyses the reaction L-seryl-[protein] + ATP = O-phospho-L-seryl-[protein] + ADP + H(+). The enzyme catalyses L-threonyl-[protein] + ATP = O-phospho-L-threonyl-[protein] + ADP + H(+). This Homo sapiens (Human) protein is Serine/threonine-protein kinase 32B.